The primary structure comprises 251 residues: SNAP25 homologous protein SNAP29 (251 aa).

The tract at residues 1–52 (MAPKNSSWNPFDDEKEAAKSFSLNPFDDDDDDKEVEKRFTSSLKPSGGKENQ) is disordered. Positions 40–52 (TSSLKPSGGKENQ) are enriched in polar residues. Residues 186-248 (KTQIAKQDEA…KQSNQRARYL (63 aa)) enclose the t-SNARE coiled-coil homology domain.

The protein belongs to the SNAP-25 family.

Its subcellular location is the membrane. It localises to the cytoplasm. In terms of biological role, SNAREs, soluble N-ethylmaleimide-sensitive factor-attachment protein receptors, are essential proteins for fusion of cellular membranes. SNAREs localized on opposing membranes assemble to form a trans-SNARE complex, an extended, parallel four alpha-helical bundle that drives membrane fusion. This is SNAP25 homologous protein SNAP29 (SNAP29) from Arabidopsis thaliana (Mouse-ear cress).